Reading from the N-terminus, the 667-residue chain is Protein-glutamine gamma-glutamyltransferase 4 (667 aa).

N-linked (GlcNAc...) asparagine glycans are attached at residues N151, N220, and N227. Catalysis depends on residues C256, H315, and D338. Residues N378 and D380 each contribute to the Ca(2+) site. N408 carries an N-linked (GlcNAc...) asparagine glycan. E430 and E435 together coordinate Ca(2+). The segment at 430-449 (EGSPEERKAMEKASGKRPDD) is disordered. N472 and N488 each carry an N-linked (GlcNAc...) asparagine glycan.

This sequence belongs to the transglutaminase superfamily. Transglutaminase family. Homodimer. Ca(2+) is required as a cofactor. The N-terminus is blocked. In terms of processing, probably linked to the cell membrane via a lipid-anchor, possibly a GPI-anchor. Post-translationally, N-glycosylated on 2 Asn residues by a high mannose oligosaccharide consisting of five mannose residues and a fucosylated biantennary complex glycan. Expressed in the coagulating gland, the dorsal part of the prostate and in semen (at protein level). Expressed at low levels in the lateral prostate and seminal vesicle. Not expressed in the epididymis, kidney, liver, serum, sperm plug, testes and ventral prostate.

It is found in the secreted. The protein localises to the cell membrane. It catalyses the reaction L-glutaminyl-[protein] + L-lysyl-[protein] = [protein]-L-lysyl-N(6)-5-L-glutamyl-[protein] + NH4(+). In terms of biological role, associated with the mammalian reproductive process. Plays an important role in the formation of the seminal coagulum through the cross-linking of specific proteins present in the seminal plasma. Transglutaminase is also required to stabilize the copulatory plug. The polypeptide is Protein-glutamine gamma-glutamyltransferase 4 (Tgm4) (Rattus norvegicus (Rat)).